Here is a 203-residue protein sequence, read N- to C-terminus: Ras-related protein Rab-18 (203 aa).

GTP is bound by residues S20, G23, K24, S25, S26, D37, P38, T43, G69, K126, D128, and A155. Residues Q40–F48 carry the Effector region motif. Residues C201 and C203 are each lipidated (S-geranylgeranyl cysteine). C203 carries the cysteine methyl ester modification.

It belongs to the small GTPase superfamily. Rab family.

The catalysed reaction is GTP + H2O = GDP + phosphate + H(+). Functionally, the small GTPases Rab are key regulators of intracellular membrane trafficking, from the formation of transport vesicles to their fusion with membranes. Rabs cycle between an inactive GDP-bound form and an active GTP-bound form that is able to recruit to membranes different sets of downstream effectors directly responsible for vesicle formation, movement, tethering and fusion. Plays a role in apical endocytosis/recycling. May be implicated in transport between the plasma membrane and early endosomes. Plays a role in the shedding of pathogen spores from intestinal cells. The sequence is that of Ras-related protein Rab-18 (rab-18) from Caenorhabditis elegans.